The sequence spans 667 residues: DNA ligase (667 aa).

Residues 32 to 36 (DSEYD), 81 to 82 (SL), and glutamate 110 contribute to the NAD(+) site. The active-site N6-AMP-lysine intermediate is lysine 112. NAD(+) contacts are provided by arginine 133, glutamate 167, lysine 283, and lysine 307. Residues cysteine 401, cysteine 404, cysteine 419, and cysteine 424 each contribute to the Zn(2+) site. The BRCT domain maps to 586 to 667 (EGHPEFSGKT…FVDKQNELNS (82 aa)).

It belongs to the NAD-dependent DNA ligase family. LigA subfamily. Mg(2+) serves as cofactor. Requires Mn(2+) as cofactor.

It catalyses the reaction NAD(+) + (deoxyribonucleotide)n-3'-hydroxyl + 5'-phospho-(deoxyribonucleotide)m = (deoxyribonucleotide)n+m + AMP + beta-nicotinamide D-nucleotide.. In terms of biological role, DNA ligase that catalyzes the formation of phosphodiester linkages between 5'-phosphoryl and 3'-hydroxyl groups in double-stranded DNA using NAD as a coenzyme and as the energy source for the reaction. It is essential for DNA replication and repair of damaged DNA. The protein is DNA ligase of Staphylococcus aureus (strain COL).